The following is a 333-amino-acid chain: Homeobox protein HMX1 (333 aa).

Disordered regions lie at residues 1–74 (MAQD…STSA), 86–109 (GTEG…APRC), and 139–204 (CASP…KKKT). The span at 17–30 (DYTQGNTDRSTAAA) shows a compositional bias: polar residues. Gly residues predominate over residues 87–105 (TEGGGGTRRAAAGGGGGRG). Basic and acidic residues predominate over residues 144–158 (TSDRDSPELPEDTER). A compositionally biased stretch (gly residues) spans 159–176 (AGGGGRAAARGPAGGRQS). The segment covering 181–192 (EEEEERGEEAGE) has biased composition (acidic residues). A DNA-binding region (homeobox) is located at residues 201–260 (KKKTRTVFSRSQVFQLESTFDVKRYLSSSERAGLAASLHLTETQVKIWFQNRRNKWKRQL). Residues 261-271 (AADLEAANLSH) carry the HMX family specific domain 1 motif.

This sequence belongs to the HMX homeobox family.

Its subcellular location is the nucleus. Its function is as follows. DNA-binding protein that binds to the 5'-CAAG-3' core sequence. May function as a transcriptional repressor. Seems to act as a transcriptional antagonist of NKX2-5. May play an important role in the development of craniofacial structures such as the eye and ear. The protein is Homeobox protein HMX1 (HMX1) of Gallus gallus (Chicken).